The sequence spans 206 residues: MTSLIMDMNRLNLDKLKHENIFSDNIIEDAKEFIFGSRKIYTDSVDDLIELYSLAKYLNNQTLKDVVIERMDYVCKYIGKDNWSTIYSFYKENGLRNSFLRQYINNNIEEICSTDQFLKLDVDSVCDILDNDEIVVTREYTILNMVLRWLENKRVNIDDFTKVMFVIRFKFITYSELTNAIEKIAPEYRQRLQDLYHKKLRVLDIL.

The BACK domain maps to 99–181; the sequence is FLRQYINNNI…ITYSELTNAI (83 aa).

The protein belongs to the orthopoxvirus OPG030 family.

The sequence is that of Protein OPG030 (OPG030) from Cynomys gunnisoni (Gunnison's prairie dog).